The sequence spans 184 residues: C-phycoerythrin class 1 subunit beta (184 aa).

(2R,3E)-phycoerythrobilin is bound by residues Cys50 and Cys61. Asn72 is modified (N4-methylasparagine). (2R,3E)-phycoerythrobilin is bound by residues Cys82 and Cys165.

It belongs to the phycobiliprotein family. In terms of assembly, heterodimer of an alpha and a beta chain. Post-translationally, contains three covalently linked bilin chromophores.

The protein localises to the cellular thylakoid membrane. In terms of biological role, light-harvesting photosynthetic bile pigment-protein from the phycobiliprotein complex. The sequence is that of C-phycoerythrin class 1 subunit beta (cpeB) from Synechococcus sp. (strain WH7803).